Reading from the N-terminus, the 187-residue chain is Elongation factor P (187 aa).

This sequence belongs to the elongation factor P family.

The protein resides in the cytoplasm. Its pathway is protein biosynthesis; polypeptide chain elongation. Its function is as follows. Involved in peptide bond synthesis. Stimulates efficient translation and peptide-bond synthesis on native or reconstituted 70S ribosomes in vitro. Probably functions indirectly by altering the affinity of the ribosome for aminoacyl-tRNA, thus increasing their reactivity as acceptors for peptidyl transferase. The polypeptide is Elongation factor P (Mycobacterium avium (strain 104)).